A 210-amino-acid chain; its full sequence is Glutathione S-transferase P 2 (210 aa).

Residues Pro-2–Gly-81 form the GST N-terminal domain. Glutathione-binding positions include Tyr-8, Arg-14, Trp-39, Lys-45, Gln-52–Leu-53, and Gln-65–Ser-66. The 122-residue stretch at Asn-83–Ile-204 folds into the GST C-terminal domain.

This sequence belongs to the GST superfamily. Pi family. Homodimer. Selectively expressed in gall bladder, colon, heart, and skeletal muscle.

The catalysed reaction is RX + glutathione = an S-substituted glutathione + a halide anion + H(+). Its function is as follows. Conjugation of reduced glutathione to a wide number of exogenous and endogenous hydrophobic electrophiles. Cannot metabolize 1-chloro-2,4-dinitrobenzene. The protein is Glutathione S-transferase P 2 (Gstp2) of Mus musculus (Mouse).